The primary structure comprises 218 residues: Thiopurine S-methyltransferase (218 aa).

Residues W10, L45, E66, and R123 each contribute to the S-adenosyl-L-methionine site.

Belongs to the class I-like SAM-binding methyltransferase superfamily. TPMT family.

It is found in the cytoplasm. It catalyses the reaction S-adenosyl-L-methionine + a thiopurine = S-adenosyl-L-homocysteine + a thiopurine S-methylether.. The protein is Thiopurine S-methyltransferase of Pseudomonas aeruginosa (strain UCBPP-PA14).